Consider the following 179-residue polypeptide: Large ribosomal subunit protein uL6 (179 aa).

It belongs to the universal ribosomal protein uL6 family. In terms of assembly, part of the 50S ribosomal subunit.

Functionally, this protein binds to the 23S rRNA, and is important in its secondary structure. It is located near the subunit interface in the base of the L7/L12 stalk, and near the tRNA binding site of the peptidyltransferase center. The polypeptide is Large ribosomal subunit protein uL6 (Bifidobacterium adolescentis (strain ATCC 15703 / DSM 20083 / NCTC 11814 / E194a)).